The sequence spans 472 residues: Probable serine/threonine-protein kinase At1g01540 (472 aa).

The chain crosses the membrane as a helical span at residues 24 to 44; that stretch reads LWVVIGILLGSLIVIALFLLS. A phosphothreonine mark is found at T67 and T143. The region spanning 154 to 431 is the Protein kinase domain; sequence LCEENVIGEG…IHMLEAEDLL (278 aa). Residues 160–168 and K182 each bind ATP; that span reads IGEGGYGIV. Residue Y227 is modified to Phosphotyrosine. The active-site Proton acceptor is the D280. S284 is subject to Phosphoserine. Phosphothreonine occurs at positions 314 and 319. Y327 carries the phosphotyrosine modification. Basic and acidic residues predominate over residues 437–449; that stretch reads RTTRDHGSRERQE. The interval 437–472 is disordered; sequence RTTRDHGSRERQETAVVAAGSESGESGSRHHQQKQR. Residues 451–462 show a composition bias toward low complexity; it reads AVVAAGSESGES.

This sequence belongs to the protein kinase superfamily. Ser/Thr protein kinase family.

Its subcellular location is the membrane. The catalysed reaction is L-seryl-[protein] + ATP = O-phospho-L-seryl-[protein] + ADP + H(+). It carries out the reaction L-threonyl-[protein] + ATP = O-phospho-L-threonyl-[protein] + ADP + H(+). The protein is Probable serine/threonine-protein kinase At1g01540 of Arabidopsis thaliana (Mouse-ear cress).